A 286-amino-acid polypeptide reads, in one-letter code: 4-hydroxy-tetrahydrodipicolinate synthase (286 aa).

Threonine 42 contributes to the pyruvate binding site. Residue tyrosine 129 is the Proton donor/acceptor of the active site. Residue lysine 157 is the Schiff-base intermediate with substrate of the active site. Valine 196 is a binding site for pyruvate.

This sequence belongs to the DapA family. As to quaternary structure, homotetramer; dimer of dimers.

It is found in the cytoplasm. It carries out the reaction L-aspartate 4-semialdehyde + pyruvate = (2S,4S)-4-hydroxy-2,3,4,5-tetrahydrodipicolinate + H2O + H(+). It participates in amino-acid biosynthesis; L-lysine biosynthesis via DAP pathway; (S)-tetrahydrodipicolinate from L-aspartate: step 3/4. In terms of biological role, catalyzes the condensation of (S)-aspartate-beta-semialdehyde [(S)-ASA] and pyruvate to 4-hydroxy-tetrahydrodipicolinate (HTPA). The sequence is that of 4-hydroxy-tetrahydrodipicolinate synthase from Chlamydia muridarum (strain MoPn / Nigg).